Reading from the N-terminus, the 247-residue chain is NAD(P)H-quinone oxidoreductase subunit K, chloroplastic (247 aa).

Residues C64, C65, C129, and C160 each contribute to the [4Fe-4S] cluster site.

This sequence belongs to the complex I 20 kDa subunit family. As to quaternary structure, NDH is composed of at least 16 different subunits, 5 of which are encoded in the nucleus. [4Fe-4S] cluster serves as cofactor.

It localises to the plastid. The protein resides in the chloroplast thylakoid membrane. It carries out the reaction a plastoquinone + NADH + (n+1) H(+)(in) = a plastoquinol + NAD(+) + n H(+)(out). It catalyses the reaction a plastoquinone + NADPH + (n+1) H(+)(in) = a plastoquinol + NADP(+) + n H(+)(out). Its function is as follows. NDH shuttles electrons from NAD(P)H:plastoquinone, via FMN and iron-sulfur (Fe-S) centers, to quinones in the photosynthetic chain and possibly in a chloroplast respiratory chain. The immediate electron acceptor for the enzyme in this species is believed to be plastoquinone. Couples the redox reaction to proton translocation, and thus conserves the redox energy in a proton gradient. The chain is NAD(P)H-quinone oxidoreductase subunit K, chloroplastic from Mesostigma viride (Green alga).